The chain runs to 221 residues: Protein LURP-one-related 17 (221 aa).

The interval 1-20 (MFPFLKQRSRSVHGEDAPSS) is disordered.

The protein belongs to the LOR family.

Might be related to the phospholipid scramblase and tubby-like superfamily of membrane tethered transcription factors. The chain is Protein LURP-one-related 17 from Arabidopsis thaliana (Mouse-ear cress).